The primary structure comprises 89 residues: Small ribosomal subunit protein bS20 (89 aa).

This sequence belongs to the bacterial ribosomal protein bS20 family.

Its function is as follows. Binds directly to 16S ribosomal RNA. The chain is Small ribosomal subunit protein bS20 from Wolbachia sp. subsp. Drosophila simulans (strain wRi).